The primary structure comprises 411 residues: Serine hydroxymethyltransferase (411 aa).

Residues L119 and 123-125 (GHL) contribute to the (6S)-5,6,7,8-tetrahydrofolate site. K228 carries the N6-(pyridoxal phosphate)lysine modification. 351–353 (SPF) contacts (6S)-5,6,7,8-tetrahydrofolate.

The protein belongs to the SHMT family. As to quaternary structure, homodimer. Pyridoxal 5'-phosphate serves as cofactor.

Its subcellular location is the cytoplasm. It carries out the reaction (6R)-5,10-methylene-5,6,7,8-tetrahydrofolate + glycine + H2O = (6S)-5,6,7,8-tetrahydrofolate + L-serine. Its pathway is one-carbon metabolism; tetrahydrofolate interconversion. It participates in amino-acid biosynthesis; glycine biosynthesis; glycine from L-serine: step 1/1. Functionally, catalyzes the reversible interconversion of serine and glycine with tetrahydrofolate (THF) serving as the one-carbon carrier. This reaction serves as the major source of one-carbon groups required for the biosynthesis of purines, thymidylate, methionine, and other important biomolecules. Also exhibits THF-independent aldolase activity toward beta-hydroxyamino acids, producing glycine and aldehydes, via a retro-aldol mechanism. This Clostridium beijerinckii (strain ATCC 51743 / NCIMB 8052) (Clostridium acetobutylicum) protein is Serine hydroxymethyltransferase.